A 301-amino-acid polypeptide reads, in one-letter code: tRNA dimethylallyltransferase (301 aa).

ATP is bound at residue 8-15; sequence GPTAVGKT. 10–15 provides a ligand contact to substrate; sequence TAVGKT. The segment at 33–36 is interaction with substrate tRNA; it reads DSRQ.

This sequence belongs to the IPP transferase family. In terms of assembly, monomer. Requires Mg(2+) as cofactor.

The catalysed reaction is adenosine(37) in tRNA + dimethylallyl diphosphate = N(6)-dimethylallyladenosine(37) in tRNA + diphosphate. Catalyzes the transfer of a dimethylallyl group onto the adenine at position 37 in tRNAs that read codons beginning with uridine, leading to the formation of N6-(dimethylallyl)adenosine (i(6)A). The protein is tRNA dimethylallyltransferase of Thermosipho melanesiensis (strain DSM 12029 / CIP 104789 / BI429).